We begin with the raw amino-acid sequence, 221 residues long: ATP-dependent dethiobiotin synthetase BioD (221 aa).

Asp-11–Leu-16 is an ATP binding site. Position 15 (Thr-15) interacts with Mg(2+). Lys-35 is an active-site residue. Thr-39 contacts substrate. ATP-binding positions include Asp-44 and Glu-103–Gly-106. Positions 44 and 103 each coordinate Mg(2+).

This sequence belongs to the dethiobiotin synthetase family. Homodimer. Mg(2+) is required as a cofactor.

The protein localises to the cytoplasm. It carries out the reaction (7R,8S)-7,8-diammoniononanoate + CO2 + ATP = (4R,5S)-dethiobiotin + ADP + phosphate + 3 H(+). Its pathway is cofactor biosynthesis; biotin biosynthesis; biotin from 7,8-diaminononanoate: step 1/2. Functionally, catalyzes a mechanistically unusual reaction, the ATP-dependent insertion of CO2 between the N7 and N8 nitrogen atoms of 7,8-diaminopelargonic acid (DAPA, also called 7,8-diammoniononanoate) to form a ureido ring. The protein is ATP-dependent dethiobiotin synthetase BioD of Leptospira borgpetersenii serovar Hardjo-bovis (strain L550).